Reading from the N-terminus, the 40-residue chain is Conotoxin Bt14.16 (40 aa).

A propeptide spanning residues 1 to 18 is cleaved from the precursor; the sequence is SDGRDAAVIYTESDVIAR. 2 disulfides stabilise this stretch: C21-C36 and C24-C29.

This sequence belongs to the conotoxin A superfamily. Expressed by the venom duct.

The protein resides in the secreted. Probable neurotoxin with unknown target. Possibly targets ion channels. This chain is Conotoxin Bt14.16, found in Conus betulinus (Beech cone).